The sequence spans 463 residues: Matrix remodeling-associated protein 8 (463 aa).

The first 19 residues, Met-1–Ala-19, serve as a signal peptide directing secretion. The Extracellular portion of the chain corresponds to Val-20 to Gln-362. 2 consecutive Ig-like V-type domains span residues Pro-29 to Thr-173 and Pro-176 to Thr-308. Cystine bridges form between Cys-54/Cys-153 and Cys-202/Cys-288. Asn-135 is a glycosylation site (N-linked (GlcNAc...) asparagine). Ser-244 is subject to Phosphoserine. Residues Arg-268 to Asp-270 carry the RGD motif. The segment at Glu-309–Leu-341 is disordered. The segment covering Ser-321–Gly-335 has biased composition (low complexity). N-linked (GlcNAc...) asparagine glycosylation occurs at Asn-324. A helical membrane pass occupies residues Leu-363–Ala-383. Over Thr-384 to Lys-463 the chain is Cytoplasmic.

In terms of assembly, homodimer in cis. Does not appear to form trans-homodimers. Interacts with ITGB3; the interaction inhibits ITGAV:ITGB3 heterodimer formation.

The protein resides in the cell membrane. Its subcellular location is the cell junction. It is found in the tight junction. The protein localises to the cytoplasm. It localises to the cell projection. The protein resides in the cilium membrane. Its subcellular location is the nucleus. Functionally, transmembrane protein which can modulate activity of various signaling pathways, probably via binding to integrin ITGAV:ITGB3. Mediates heterophilic cell-cell interactions in vitro. Inhibits osteoclastogenesis downstream of TNFSF11/RANKL and CSF1, where it may function by attenuating signaling via integrin ITGB3 and MAP kinase p38. Plays a role in cartilage formation where it promotes proliferation and maturation of growth plate chondrocytes. Stimulates formation of primary cilia in chondrocytes. Enhances expression of genes involved in the hedgehog signaling pathway in chondrocytes, including the hedgehog signaling molecule IHH; may also promote signaling via the PTHLH/PTHrP pathway. Plays a role in angiogenesis where it suppresses migration of endothelial cells and also promotes their apoptosis. Inhibits VEGF-induced activation of AKT and p38 MAP kinase in endothelial cells. Also inhibits VTN (vitronectin)-mediated integrin ITGAV:ITGB3 signaling and activation of PTK2/FAK. May play a role in the maturation and maintenance of the blood-brain barrier. This Bos taurus (Bovine) protein is Matrix remodeling-associated protein 8 (MXRA8).